We begin with the raw amino-acid sequence, 136 residues long: uncharacterized protein (136 aa).

Transmembrane regions (helical) follow at residues 36-56 (FLLT…IYLI) and 63-83 (FAFA…LFLS).

It localises to the cell membrane. This is an uncharacterized protein from Mycoplasma pneumoniae (strain ATCC 29342 / M129 / Subtype 1) (Mycoplasmoides pneumoniae).